Reading from the N-terminus, the 989-residue chain is Vacuolar membrane protease (989 aa).

Residues 1 to 25 (MDRQSLRTTLRAMDASNENGSAKGA) form a disordered region. Over 1–41 (MDRQSLRTTLRAMDASNENGSAKGAKKTTIGSFVRWTFGFN) the chain is Cytoplasmic. Residues 42–62 (SVPLTTLVTITTVLLGLLVYV) traverse the membrane as a helical segment. The Vacuolar portion of the chain corresponds to 63 to 383 (STSVNPPDVT…YLFIILPLQY (321 aa)). 2 residues coordinate Zn(2+): histidine 181 and aspartate 193. Glutamate 227 (proton acceptor) is an active-site residue. Glutamate 228 lines the Zn(2+) pocket. Asparagine 245 carries an N-linked (GlcNAc...) asparagine glycan. Residues glutamate 253 and histidine 325 each contribute to the Zn(2+) site. The helical transmembrane segment at 384–404 (IFVISCLTLAVGPIFVGFLFL) threads the bilayer. Topologically, residues 405 to 426 (LVLRKQINAGTSETILGGWLRS) are cytoplasmic. A helical membrane pass occupies residues 427 to 447 (IVSVLVSVVATYFVVETLHLG). Residues 448-460 (NELYVVRSFYTPL) lie on the Vacuolar side of the membrane. The helical transmembrane segment at 461 to 481 (FAGLGTFIFVNYVLLGFFHFV) threads the bilayer. Over 482–488 (RPVCDQK) the chain is Cytoplasmic. Residues 489–509 (LIILLELSVVLWVLLLLSVIH) form a helical membrane-spanning segment. Residues 510-520 (EATHKATGEYH) are Vacuolar-facing. Residues 521-541 (FLILYIVVATASILGLFGHLV) traverse the membrane as a helical segment. Topologically, residues 542–611 (TSTETSTFVE…IAVSMGYDWS (70 aa)) are cytoplasmic. The disordered stretch occupies residues 548–576 (TFVEGPEDEEDTVDASEATETSPLLPEAS). A compositionally biased stretch (acidic residues) spans 552–561 (GPEDEEDTVD). Residues 612–632 (IQFLLVVPITFFVTFGLAASL) traverse the membrane as a helical segment. Topologically, residues 633–648 (LDGLHQTPLESEKSAD) are vacuolar. Residues 649 to 669 (FVYTTITAMSVLVGITFLPFV) form a helical membrane-spanning segment. Residues 670–673 (HKLQ) are Cytoplasmic-facing. A helical transmembrane segment spans residues 674-694 (VFVPIVVVGVAVTASFVHILS). At 695-989 (PPFSSNAPAK…LVEVSKYVEL (295 aa)) the chain is on the vacuolar side. 3 N-linked (GlcNAc...) asparagine glycosylation sites follow: asparagine 745, asparagine 793, and asparagine 822.

Belongs to the peptidase M28 family. Requires Zn(2+) as cofactor.

The protein resides in the vacuole membrane. May be involved in vacuolar sorting and osmoregulation. The protein is Vacuolar membrane protease of Yarrowia lipolytica (strain CLIB 122 / E 150) (Yeast).